The primary structure comprises 243 residues: Thaumatin-like protein (243 aa).

A signal peptide spans 1-20; the sequence is MASINLFLFAFLLLLSHASA. 8 disulfides stabilise this stretch: C29/C238, C77/C87, C92/C98, C144/C228, C149/C211, C157/C174, C178/C187, and C188/C198.

This sequence belongs to the thaumatin family.

In Arabidopsis thaliana (Mouse-ear cress), this protein is Thaumatin-like protein.